A 101-amino-acid polypeptide reads, in one-letter code: Large ribosomal subunit protein uL24c (101 aa).

The protein belongs to the universal ribosomal protein uL24 family. Part of the 50S ribosomal subunit.

The protein resides in the plastid. The protein localises to the chloroplast. One of two assembly initiator proteins, it binds directly to the 5'-end of the 23S rRNA, where it nucleates assembly of the 50S subunit. The sequence is that of Large ribosomal subunit protein uL24c (rpl24) from Guillardia theta (Cryptophyte).